Here is a 332-residue protein sequence, read N- to C-terminus: Adenosine receptor A2b (332 aa).

Residues 1–8 (MQLETQDA) lie on the Extracellular side of the membrane. A helical transmembrane segment spans residues 9–33 (LYVALELVIAALAVAGNVLVCAAVG). Topologically, residues 34 to 43 (ASSALQTPTN) are cytoplasmic. The helical transmembrane segment at 44 to 67 (YFLVSLATADVAVGLFAIPFAITI) threads the bilayer. Residues 68–78 (SLGFCTDFHSC) are Extracellular-facing. Cysteine 78 and cysteine 171 are oxidised to a cystine. Residues 79-101 (LFLACFVLVLTQSSIFSLLAVAV) traverse the membrane as a helical segment. Residues 102 to 121 (DRYLAIRVPLRYKGLVTGTR) are Cytoplasmic-facing. Residues 122 to 144 (ARGIIAVLWVLAFGIGLTPFLGW) form a helical membrane-spanning segment. The Extracellular portion of the chain corresponds to 145–178 (NSKDRATSNCTEPGDGITNKSCCPVKCLFENVVP). Asparagine 153 and asparagine 163 each carry an N-linked (GlcNAc...) asparagine glycan. Glutamate 174 serves as a coordination point for adenosine. The chain crosses the membrane as a helical span at residues 179 to 203 (MSYMVYFNFFGCVLPPLLIMMVIYI). At 204 to 235 (KIFMVACKQLQHMELMEHSRTTLQREIHAAKS) the chain is on the cytoplasmic side. A helical membrane pass occupies residues 236–259 (LAMIVGIFALCWLPVHAINCITLF). Asparagine 254 is an adenosine binding site. Topologically, residues 260–267 (HPALAKDK) are extracellular. The chain crosses the membrane as a helical span at residues 268-291 (PKWVMNVAILLSHANSVVNPIVYA). Adenosine contacts are provided by serine 279 and histidine 280. The Cytoplasmic segment spans residues 292–332 (YRNRDFRYSFHRIISRYVLCQTDTKGGSGQAGGQSTFSLSL). The S-palmitoyl cysteine moiety is linked to residue cysteine 311.

This sequence belongs to the G-protein coupled receptor 1 family.

It is found in the cell membrane. Its function is as follows. Receptor for adenosine. The activity of this receptor is mediated by G proteins which activate adenylyl cyclase. The polypeptide is Adenosine receptor A2b (Adora2b) (Rattus norvegicus (Rat)).